We begin with the raw amino-acid sequence, 148 residues long: Lysozyme C, non-stomach isozyme (148 aa).

An N-terminal signal peptide occupies residues methionine 1 to glycine 18. The C-type lysozyme domain occupies lysine 19–valine 148. Intrachain disulfides connect cysteine 24-cysteine 146, cysteine 48-cysteine 134, cysteine 83-cysteine 99, and cysteine 95-cysteine 113. Catalysis depends on residues glutamate 53 and aspartate 71.

This sequence belongs to the glycosyl hydrolase 22 family. As to expression, expressed in blood cells.

It catalyses the reaction Hydrolysis of (1-&gt;4)-beta-linkages between N-acetylmuramic acid and N-acetyl-D-glucosamine residues in a peptidoglycan and between N-acetyl-D-glucosamine residues in chitodextrins.. Its function is as follows. Lysozymes have primarily a bacteriolytic function; those in tissues and body fluids are associated with the monocyte-macrophage system and enhance the activity of immunoagents. The polypeptide is Lysozyme C, non-stomach isozyme (LYS) (Bos taurus (Bovine)).